The following is a 136-amino-acid chain: Protein NrdI (136 aa).

It belongs to the NrdI family.

Functionally, probably involved in ribonucleotide reductase function. This Escherichia coli (strain 55989 / EAEC) protein is Protein NrdI.